The chain runs to 430 residues: Crotonyl-CoA carboxylase/reductase (430 aa).

The protein belongs to the zinc-containing alcohol dehydrogenase family. Crotonyl-CoA carboxylase/reductase subfamily. In terms of assembly, homodimer. Requires Despite some sequence similarity to zinc-containing alcohol dehydrogenases, this enzyme does not bind any metals. as cofactor.

The catalysed reaction is (2S)-ethylmalonyl-CoA + NADP(+) = (2E)-butenoyl-CoA + CO2 + NADPH. The enzyme catalyses (S)-methylmalonyl-CoA + NADP(+) = acryloyl-CoA + CO2 + NADPH. It catalyses the reaction butanoyl-CoA + NADP(+) = (2E)-butenoyl-CoA + NADPH + H(+). In terms of biological role, catalyzes the NADPH-dependent reductive carboxylation of crotonyl-CoA ((2E)-butenoyl-CoA) to (2S)-ethylmalonyl-CoA, in the presence of CO2. This is a key reaction in the ethylmalonyl-CoA pathway for acetyl-CoA assimilation required for R.sphaeroides growth on acetate as sole carbon source. Is also able to accept acryloyl-CoA as an alternative substrate, yielding (2S)-methylmalonyl-CoA. To a lesser extent, when CO2 is absent, the enzyme also catalyzes the reduction of crotonyl-CoA to butanoyl-CoA. This is Crotonyl-CoA carboxylase/reductase from Cereibacter sphaeroides (strain ATCC 17023 / DSM 158 / JCM 6121 / CCUG 31486 / LMG 2827 / NBRC 12203 / NCIMB 8253 / ATH 2.4.1.) (Rhodobacter sphaeroides).